The primary structure comprises 838 residues: Translation initiation factor IF-2 (838 aa).

The interval 1-235 (MSDTDGKKPL…RSLAAMKREQ (235 aa)) is disordered. Over residues 18 to 27 (SGQVKQSFSH) the composition is skewed to polar residues. Low complexity predominate over residues 50–60 (SGSSTTTSSPS). Residues 88–156 (KLREVDDAKR…AARRAEEAKR (69 aa)) are compositionally biased toward basic and acidic residues. Residues 162-177 (PAAAQPDAADSRASAP) are compositionally biased toward low complexity. Over residues 187–208 (SRKEREREADRDRTTKKDDSRR) the composition is skewed to basic and acidic residues. The tr-type G domain occupies 335–509 (PRPPIITIMG…ELLDLRANPK (175 aa)). Positions 344-351 (GHVDHGKT) are G1. A GTP-binding site is contributed by 344–351 (GHVDHGKT). A G2 region spans residues 369 to 373 (GITQH). The segment at 391-394 (DTPG) is G3. Residues 391–395 (DTPGH) and 445–448 (NKID) each bind GTP. The tract at residues 445 to 448 (NKID) is G4. Positions 481-483 (SAK) are G5.

The protein belongs to the TRAFAC class translation factor GTPase superfamily. Classic translation factor GTPase family. IF-2 subfamily.

The protein resides in the cytoplasm. Its function is as follows. One of the essential components for the initiation of protein synthesis. Protects formylmethionyl-tRNA from spontaneous hydrolysis and promotes its binding to the 30S ribosomal subunits. Also involved in the hydrolysis of GTP during the formation of the 70S ribosomal complex. This is Translation initiation factor IF-2 from Cereibacter sphaeroides (strain ATCC 17025 / ATH 2.4.3) (Rhodobacter sphaeroides).